The chain runs to 177 residues: MDPTAPGSSVSSLPLLLVLALGLAILHCVVADGNTTRTPETNGSLCGAPGENCTGTTPRQKVKTHFSRCPKQYKHYCIHGRCRFVVDEQTPSCICEKGYFGARCERVDLFYLQQDRGQILVVCLIVVMVVFIILVIGVCTCCHPLRKHRKKKKEEKMETLDKDKTPISEDIQETNIA.

The first 31 residues, 1 to 31 (MDPTAPGSSVSSLPLLLVLALGLAILHCVVA), serve as a signal peptide directing secretion. Residues 32-118 (DGNTTRTPET…LFYLQQDRGQ (87 aa)) lie on the Extracellular side of the membrane. 3 N-linked (GlcNAc...) asparagine glycosylation sites follow: asparagine 34, asparagine 42, and asparagine 52. The EGF-like domain maps to 65-105 (HFSRCPKQYKHYCIHGRCRFVVDEQTPSCICEKGYFGARCE). 3 cysteine pairs are disulfide-bonded: cysteine 69–cysteine 82, cysteine 77–cysteine 93, and cysteine 95–cysteine 104. Residues 112–177 (LQQDRGQILV…SEDIQETNIA (66 aa)) constitute a propeptide, removed in mature form. A helical transmembrane segment spans residues 119–139 (ILVVCLIVVMVVFIILVIGVC). Over 140 to 177 (TCCHPLRKHRKKKKEEKMETLDKDKTPISEDIQETNIA) the chain is Cytoplasmic. The segment at 153-177 (KEEKMETLDKDKTPISEDIQETNIA) is disordered. The segment covering 154 to 167 (EEKMETLDKDKTPI) has biased composition (basic and acidic residues).

As to quaternary structure, monomer. Interacts with EGFR and ERBB4. In terms of tissue distribution, found in several mouse tissues including kidney, uterus and liver, as well as in beta tumor cell line and MCF-7 cells. It is not detected in the brain.

It is found in the secreted. Its subcellular location is the extracellular space. It localises to the cell membrane. Its function is as follows. Growth factor that binds to EGFR, ERBB4 and other EGF receptor family members. Potent mitogen for retinal pigment epithelial cells and vascular smooth muscle cells. The sequence is that of Probetacellulin (Btc) from Mus musculus (Mouse).